The primary structure comprises 122 residues: Small ribosomal subunit protein uS13 (122 aa).

A disordered region spans residues 99-122 (RGQRTHTNARTRKGPAKAIAGKKK).

Belongs to the universal ribosomal protein uS13 family. Part of the 30S ribosomal subunit. Forms a loose heterodimer with protein S19. Forms two bridges to the 50S subunit in the 70S ribosome.

Functionally, located at the top of the head of the 30S subunit, it contacts several helices of the 16S rRNA. In the 70S ribosome it contacts the 23S rRNA (bridge B1a) and protein L5 of the 50S subunit (bridge B1b), connecting the 2 subunits; these bridges are implicated in subunit movement. Contacts the tRNAs in the A and P-sites. This Bradyrhizobium diazoefficiens (strain JCM 10833 / BCRC 13528 / IAM 13628 / NBRC 14792 / USDA 110) protein is Small ribosomal subunit protein uS13.